We begin with the raw amino-acid sequence, 139 residues long: D-ribose pyranase (139 aa).

Histidine 20 (proton donor) is an active-site residue. Substrate contacts are provided by residues aspartate 28, histidine 106, and tyrosine 128–asparagine 130.

Belongs to the RbsD / FucU family. RbsD subfamily. Homodecamer.

It localises to the cytoplasm. It carries out the reaction beta-D-ribopyranose = beta-D-ribofuranose. It participates in carbohydrate metabolism; D-ribose degradation; D-ribose 5-phosphate from beta-D-ribopyranose: step 1/2. Functionally, catalyzes the interconversion of beta-pyran and beta-furan forms of D-ribose. In Haemophilus influenzae (strain 86-028NP), this protein is D-ribose pyranase.